A 442-amino-acid polypeptide reads, in one-letter code: F-box only protein 39 (442 aa).

The F-box domain maps to 16-61; that stretch reads WAFLPDLCLCRVFWWLGDRDRSRAALVCRKWNQMMYSAELWRYRTI.

Directly interacts with SKP1 and CUL1.

Substrate-recognition component of the SCF (SKP1-CUL1-F-box protein)-type E3 ubiquitin ligase complex. This Homo sapiens (Human) protein is F-box only protein 39 (FBXO39).